The primary structure comprises 223 residues: uncharacterized protein (223 aa).

One can recognise a Tyr recombinase domain in the interval 29 to 220 (KQTYKMFKED…AKEILKNIGD (192 aa)). Active-site residues include R71, K103, H170, R173, and H196. Y205 functions as the O-(3'-phospho-DNA)-tyrosine intermediate in the catalytic mechanism.

This sequence belongs to the 'phage' integrase family.

This is an uncharacterized protein from Methanocaldococcus jannaschii (strain ATCC 43067 / DSM 2661 / JAL-1 / JCM 10045 / NBRC 100440) (Methanococcus jannaschii).